The sequence spans 231 residues: uncharacterized protein (231 aa).

Helical transmembrane passes span 4–24, 29–49, 58–78, 95–115, 147–167, and 211–231; these read YIIY…LQIS, SMIF…LVIG, AGNA…ALPL, TVVI…LLLG, VTAV…YLVL, and LCGI…YFFV.

It belongs to the YohK (E.coli)/YwbG (IPA-22R) (B.subtilis) family.

Its subcellular location is the cell membrane. This is an uncharacterized protein from Haemophilus influenzae (strain ATCC 51907 / DSM 11121 / KW20 / Rd).